A 249-amino-acid polypeptide reads, in one-letter code: Hydroxyacylglutathione hydrolase (249 aa).

7 residues coordinate Zn(2+): His54, His56, Asp58, His59, His113, Asp138, and His176.

This sequence belongs to the metallo-beta-lactamase superfamily. Glyoxalase II family. As to quaternary structure, monomer. It depends on Zn(2+) as a cofactor.

The enzyme catalyses an S-(2-hydroxyacyl)glutathione + H2O = a 2-hydroxy carboxylate + glutathione + H(+). It functions in the pathway secondary metabolite metabolism; methylglyoxal degradation; (R)-lactate from methylglyoxal: step 2/2. In terms of biological role, thiolesterase that catalyzes the hydrolysis of S-D-lactoyl-glutathione to form glutathione and D-lactic acid. The polypeptide is Hydroxyacylglutathione hydrolase (Parasynechococcus marenigrum (strain WH8102)).